Here is a 636-residue protein sequence, read N- to C-terminus: DNA primase (636 aa).

The segment at 44–68 (CPFHDEKTPSFHVRPNHGHFHCFGC) adopts a CHC2-type zinc-finger fold. Residues 266–352 (HQAVVVEGYT…SGQSFVAVAA (87 aa)) form the Toprim domain. The Mg(2+) site is built by Glu272, Asp323, and Asp325. Over residues 443–459 (REEAKGGGRKDNNRRGQ) the composition is skewed to basic and acidic residues. The tract at residues 443-481 (REEAKGGGRKDNNRRGQETAARPKPPPVQRPDPTDPTLW) is disordered.

It belongs to the DnaG primase family. Monomer. Interacts with DnaB. Zn(2+) serves as cofactor. The cofactor is Mg(2+).

The enzyme catalyses ssDNA + n NTP = ssDNA/pppN(pN)n-1 hybrid + (n-1) diphosphate.. In terms of biological role, RNA polymerase that catalyzes the synthesis of short RNA molecules used as primers for DNA polymerase during DNA replication. The polypeptide is DNA primase (Mycolicibacterium smegmatis (strain ATCC 700084 / mc(2)155) (Mycobacterium smegmatis)).